A 125-amino-acid chain; its full sequence is Steroid Delta-isomerase (125 aa).

Tyrosine 14 acts as the Proton donor in catalysis. Aspartate 38 (proton acceptor) is an active-site residue. Aspartate 99 contributes to the substrate binding site.

In terms of assembly, homodimer.

It catalyses the reaction a 3-oxo-Delta(5)-steroid = a 3-oxo-Delta(4)-steroid. The polypeptide is Steroid Delta-isomerase (ksi) (Comamonas testosteroni (Pseudomonas testosteroni)).